The chain runs to 105 residues: Late embryogenesis abundant protein Lea5-A (105 aa).

This sequence belongs to the LEA type 3 family.

This Gossypium hirsutum (Upland cotton) protein is Late embryogenesis abundant protein Lea5-A (LEA5-A).